Here is a 1008-residue protein sequence, read N- to C-terminus: Envelopment polyprotein (1008 aa).

Positions 1–17 (MVRTYLLLLLLCGPATP) are cleaved as a signal peptide. At 18–394 (FFNHLMDVTR…NWANIHCFSK (377 aa)) the chain is on the lumenal side. Residues Asn34, Asn70, and Asn108 are each glycosylated (N-linked (GlcNAc...) asparagine; by host). 8 cysteine pairs are disulfide-bonded: Cys138–Cys269, Cys156–Cys166, Cys206–Cys247, Cys216–Cys226, Cys233–Cys238, Cys292–Cys295, Cys299–Cys368, and Cys319–Cys324. A glycan (N-linked (GlcNAc...) asparagine; by host) is linked at Asn208. The chain crosses the membrane as a helical span at residues 395 to 415 (EQVLILVAVSSLCILLLASVL). Over 416–496 (RALKVIATFT…VRQKMFNLTR (81 aa)) the chain is Cytoplasmic. Residues 419–465 (KVIATFTWKIIKPFWWILSLLCRTCSKRLNKRAERLKESIHSLEEGL) form a golgi retention signal region. An important for correct targeting of the glycoproteins to the Golgi complex but not for heterodimerization region spans residues 461 to 465 (LEEGL). The segment at 497–513 (LSPVVVGMLCLACPVES) is internal signal sequence for glycoprotein C. 12 cysteine pairs are disulfide-bonded: Cys514–Cys555, Cys527–Cys537, Cys580–Cys677, Cys595–Cys789, Cys601–Cys650, Cys607–Cys657, Cys612–Cys639, Cys643–Cys648, Cys728–Cys742, Cys758–Cys771, Cys851–Cys924, and Cys861–Cys864. Residues 514–977 (CSDSISVTAS…GWFKASWLRA (464 aa)) lie on the Lumenal side of the membrane. Residues 601–607 (CHLMGAC) form a fusion loop region. Residues 644–655 (GGALCQCFNMRP) are fusion loop. Asn691 and Asn696 each carry an N-linked (GlcNAc...) asparagine; by host glycan. N-linked (GlcNAc...) asparagine; by host glycosylation is found at Asn912 and Asn949. The helical transmembrane segment at 978-998 (IWAILGGTVSLIIGVVIIYMV) threads the bilayer. The Cytoplasmic portion of the chain corresponds to 999–1008 (FTLCLKVKKS).

It belongs to the phlebovirus envelope glycoprotein family. Homodimer. Heterodimer with glycoprotein C. Homotrimer (postfusion). As to quaternary structure, heterodimer with glycoprotein N. Homotrimer (postfusion). In terms of processing, specific enzymatic cleavages in vivo yield mature proteins including glycoprotein C and glycoprotein N. Post-translationally, the cytoplasmic tail is Palmitoylated. Glycosylated. Contains principally poly-N-acetyllactosamine glycans. In terms of processing, glycosylated. Contains principally oligomannose-type glycans that can attach to host CD209/DC-SIGN. Post-translationally, palmitoylated.

Its subcellular location is the virion membrane. It localises to the host Golgi apparatus membrane. The protein localises to the host endoplasmic reticulum membrane. Functionally, structural component of the virion that interacts with glycoprotein C. It shields the hydrophobic fusion loops of the glycoprotein C, preventing premature fusion. The glycoprotein protrusions are arranged on an icosahedral lattice, with T=12 triangulation. They are able to attach the virion to the host cell receptor CD209/DC-SIGN and to promote fusion of membranes with the late endosome after endocytosis of the virion. Plays a role in the packaging of ribonucleoproteins during virus assembly. Its function is as follows. Structural component of the virion that interacts with glycoprotein N. Acts as a class II fusion protein that is activated upon acidification and subsequent repositioning of the glycoprotein N. The glycoprotein protrusions are arranged on an icosahedral lattice, with T=12 triangulation. They are able to attach the virion to the host cell receptor CD209/DC-SIGN and to promote fusion of membranes with the late endosome after endocytosis of the virion. This is Envelopment polyprotein (GP) from Homo sapiens (Human).